The sequence spans 484 residues: UDP-N-acetylmuramoyl-L-alanyl-D-glutamate--2,6-diaminopimelate ligase (484 aa).

ATP is bound at residue 110-116; it reads GTNGKTT. Residues 152 to 153, serine 179, and arginine 187 each bind UDP-N-acetyl-alpha-D-muramoyl-L-alanyl-D-glutamate; that span reads TT. Lysine 219 is subject to N6-carboxylysine. Residues arginine 381, 405 to 408, glycine 455, and glutamate 459 each bind meso-2,6-diaminopimelate; that span reads DNPR. Positions 405-408 match the Meso-diaminopimelate recognition motif motif; it reads DNPR.

This sequence belongs to the MurCDEF family. MurE subfamily. It depends on Mg(2+) as a cofactor. In terms of processing, carboxylation is probably crucial for Mg(2+) binding and, consequently, for the gamma-phosphate positioning of ATP.

The protein localises to the cytoplasm. It carries out the reaction UDP-N-acetyl-alpha-D-muramoyl-L-alanyl-D-glutamate + meso-2,6-diaminopimelate + ATP = UDP-N-acetyl-alpha-D-muramoyl-L-alanyl-gamma-D-glutamyl-meso-2,6-diaminopimelate + ADP + phosphate + H(+). It participates in cell wall biogenesis; peptidoglycan biosynthesis. Catalyzes the addition of meso-diaminopimelic acid to the nucleotide precursor UDP-N-acetylmuramoyl-L-alanyl-D-glutamate (UMAG) in the biosynthesis of bacterial cell-wall peptidoglycan. This chain is UDP-N-acetylmuramoyl-L-alanyl-D-glutamate--2,6-diaminopimelate ligase, found in Clostridium perfringens (strain 13 / Type A).